Consider the following 61-residue polypeptide: Potassium channel toxin alpha-KTx 5.3 (61 aa).

The N-terminal stretch at 1–28 (MHNYYKIVLIMVAFFAVIITFSNIQVEG) is a signal peptide. 3 disulfide bridges follow: cysteine 31-cysteine 49, cysteine 36-cysteine 54, and cysteine 40-cysteine 56. Residues 34–37 (KRCQ) form a [R/K]XCQ motif region. Histidine 59 bears the Histidine amide mark.

The protein belongs to the short scorpion toxin superfamily. Potassium channel inhibitor family. Alpha-KTx 05 subfamily. Expressed by the venom gland.

The protein resides in the secreted. In terms of biological role, blocks small conductance calcium-activated potassium channels (KCNN, SK). Has also been shown to weakly inhibit Kv11.1/KCNH2/ERG1, Kv1.2/KCNA2, Kv1.3/KCNA3 and Kv2.1/KCNB1 voltage-gated potassium channels. This Olivierus martensii (Manchurian scorpion) protein is Potassium channel toxin alpha-KTx 5.3.